Reading from the N-terminus, the 504-residue chain is Paired zinc finger protein 1 (504 aa).

2 C2H2-type zinc fingers span residues 12-35 (LLCG…RQRH) and 39-62 (HMCL…KNKH). The segment at 68 to 91 (FICVCCNWSFGTEIYLKCHEECMK) adopts a C2H2-type 3; degenerate zinc-finger fold. Disordered stretches follow at residues 115-136 (ALNT…SPVP) and 154-173 (IESA…LVSG). Polar residues predominate over residues 159–172 (RSSASTSTPRTLVS). 2 C2H2-type zinc fingers span residues 179–202 (IPCG…RRFH) and 206–229 (HTCL…KSQH). The segment at 235–258 (YNCLCCNWTFLNQVHLISHKTCLK) adopts a C2H2-type 6; degenerate zinc-finger fold. Residues 309 to 332 (LSCKSCGKFFYSERSLSKHHRQIH) form a C2H2-type 7 zinc finger. Residues 365 to 389 (FNCRCCNWSFATRRCLMSHVECLKK) form a C2H2-type 8; degenerate zinc finger.

Expressed in proximal gonad.

In terms of biological role, possible transcriptional regulator. Involved in promoting segregation of chromosomes during meiosis, perhaps acting downstream of the let-60 RAS / mpk-1 MAPK signaling pathway. The sequence is that of Paired zinc finger protein 1 from Caenorhabditis elegans.